We begin with the raw amino-acid sequence, 1056 residues long: 120.7 kDa protein in NOF-FB transposable element (1056 aa).

The disordered stretch occupies residues 716 to 749 (KTIKPTEGNDAEDNDTDDENKEMDLSEQPKEKPR). Residues 724–736 (NDAEDNDTDDENK) are compositionally biased toward acidic residues. Residues 737-749 (EMDLSEQPKEKPR) are compositionally biased toward basic and acidic residues.

It is found in the nucleus. Its function is as follows. May be involved in the transposition of NOF-FB and other FB elements. The polypeptide is 120.7 kDa protein in NOF-FB transposable element (NOF) (Drosophila melanogaster (Fruit fly)).